We begin with the raw amino-acid sequence, 671 residues long: APC membrane recruitment protein 2 (671 aa).

Disordered regions lie at residues 1–24 (METS…ASVG), 76–358 (SGGT…SDPS), 391–414 (EAGP…KNPG), and 444–598 (SQTE…PLRT). Gly residues-rich tracts occupy residues 7–21 (RGGG…GAGA) and 126–137 (GGDSGGGGGGRP). Ser-162 carries the post-translational modification Phosphoserine. A compositionally biased stretch (basic and acidic residues) spans 171–182 (GRSENGKGEPVD). Phosphoserine occurs at positions 229 and 233. 3 stretches are compositionally biased toward basic and acidic residues: residues 236–260 (CVKE…RDPA), 276–286 (APARSCREAEG), and 295–307 (ARGE…RRAE). Residues 342 to 353 (APAAPDPASVDP) show a composition bias toward low complexity. 2 positions are modified to phosphoserine: Ser-355 and Ser-358. The segment covering 447-458 (EEQGPEPQEGAA) has biased composition (low complexity). Basic and acidic residues-rich tracts occupy residues 472–487 (TPKD…DASS) and 498–514 (IEPH…KEQQ).

The protein belongs to the Amer family. In terms of assembly, interacts with APC.

It is found in the cell membrane. Negative regulator of the canonical Wnt signaling pathway involved in neuroectodermal patterning. Acts by specifically binding phosphatidylinositol 4,5-bisphosphate (PtdIns(4,5)P2), translocating to the cell membrane and interacting with key regulators of the canonical Wnt signaling pathway, such as components of the beta-catenin destruction complex. This is APC membrane recruitment protein 2 (AMER2) from Homo sapiens (Human).